Reading from the N-terminus, the 283-residue chain is 2-dehydro-3-deoxyphosphooctonate aldolase (283 aa).

The protein belongs to the KdsA family.

It is found in the cytoplasm. The catalysed reaction is D-arabinose 5-phosphate + phosphoenolpyruvate + H2O = 3-deoxy-alpha-D-manno-2-octulosonate-8-phosphate + phosphate. It participates in carbohydrate biosynthesis; 3-deoxy-D-manno-octulosonate biosynthesis; 3-deoxy-D-manno-octulosonate from D-ribulose 5-phosphate: step 2/3. It functions in the pathway bacterial outer membrane biogenesis; lipopolysaccharide biosynthesis. This chain is 2-dehydro-3-deoxyphosphooctonate aldolase, found in Parasynechococcus marenigrum (strain WH8102).